Reading from the N-terminus, the 724-residue chain is Protein arginine N-methyltransferase 1.6 (724 aa).

SAM-dependent MTase PRMT-type domains are found at residues 61-388 (NDQP…YNLK) and 395-721 (HERT…IVTH). Active-site residues include Glu-183 and Glu-192.

This sequence belongs to the class I-like SAM-binding methyltransferase superfamily. Protein arginine N-methyltransferase family. PRMT7 subfamily.

Functionally, arginine methyltransferase that can both catalyze the formation of omega-N monomethylarginine (MMA) and symmetrical dimethylarginine (sDMA). This is Protein arginine N-methyltransferase 1.6 (PRMT16) from Arabidopsis thaliana (Mouse-ear cress).